The primary structure comprises 295 residues: Large ribosomal subunit protein uL2 (295 aa).

The disordered stretch occupies residues 243-295; that stretch reads WRPHTRGTAMNPVDHPHGGGEGRTRGKHPESPWDGRRRDTRREGVRSTPISLS. The segment covering 256 to 287 has biased composition (basic and acidic residues); that stretch reads DHPHGGGEGRTRGKHPESPWDGRRRDTRREGV.

Belongs to the universal ribosomal protein uL2 family. In terms of assembly, part of the 50S ribosomal subunit. Forms a bridge to the 30S subunit in the 70S ribosome.

Its function is as follows. One of the primary rRNA binding proteins. Required for association of the 30S and 50S subunits to form the 70S ribosome, for tRNA binding and peptide bond formation. It has been suggested to have peptidyltransferase activity; this is somewhat controversial. Makes several contacts with the 16S rRNA in the 70S ribosome. The chain is Large ribosomal subunit protein uL2 from Aquifex pyrophilus.